The sequence spans 366 residues: Probable trehalose-phosphate phosphatase 3 (366 aa).

This sequence belongs to the trehalose phosphatase family. It depends on a divalent metal cation as a cofactor.

The catalysed reaction is alpha,alpha-trehalose 6-phosphate + H2O = alpha,alpha-trehalose + phosphate. It functions in the pathway glycan biosynthesis; trehalose biosynthesis. Its function is as follows. Removes the phosphate from trehalose 6-phosphate to produce free trehalose. Trehalose accumulation in plant may improve abiotic stress tolerance. This Oryza sativa subsp. japonica (Rice) protein is Probable trehalose-phosphate phosphatase 3 (TPP3).